Consider the following 131-residue polypeptide: MDSNKETKFSIQYGPKDILDKKFKNKVRGYDPDEVDEFLDGIIRDYEAFTNEIDRLKEENTKLFSRVDELTKQLSVSKNVSAQTPQTNAAATNYDILKRLSNLERHVFGSKLSDSSVDNHDDGNHSDVDQY.

Residues 39 to 76 (LDGIIRDYEAFTNEIDRLKEENTKLFSRVDELTKQLSV) adopt a coiled-coil conformation. Residues 111 to 131 (KLSDSSVDNHDDGNHSDVDQY) are disordered. The span at 117-131 (VDNHDDGNHSDVDQY) shows a compositional bias: basic and acidic residues.

This sequence belongs to the GpsB family. As to quaternary structure, forms polymers through the coiled coil domains. Interacts with PBP1, MreC and EzrA.

It is found in the cytoplasm. Its function is as follows. Divisome component that associates with the complex late in its assembly, after the Z-ring is formed, and is dependent on DivIC and PBP2B for its recruitment to the divisome. Together with EzrA, is a key component of the system that regulates PBP1 localization during cell cycle progression. Its main role could be the removal of PBP1 from the cell pole after pole maturation is completed. Also contributes to the recruitment of PBP1 to the division complex. Not essential for septum formation. The protein is Cell cycle protein GpsB of Lacticaseibacillus casei (strain BL23) (Lactobacillus casei).